Reading from the N-terminus, the 414-residue chain is Enolase (414 aa).

(2R)-2-phosphoglycerate is bound at residue glutamine 162. Glutamate 204 functions as the Proton donor in the catalytic mechanism. Residues aspartate 239, glutamate 280, and aspartate 307 each contribute to the Mg(2+) site. Residues lysine 332, arginine 361, serine 362, and lysine 383 each contribute to the (2R)-2-phosphoglycerate site. Residue lysine 332 is the Proton acceptor of the active site.

It belongs to the enolase family. Requires Mg(2+) as cofactor.

It is found in the cytoplasm. Its subcellular location is the secreted. The protein resides in the cell surface. The enzyme catalyses (2R)-2-phosphoglycerate = phosphoenolpyruvate + H2O. Its pathway is carbohydrate degradation; glycolysis; pyruvate from D-glyceraldehyde 3-phosphate: step 4/5. Catalyzes the reversible conversion of 2-phosphoglycerate (2-PG) into phosphoenolpyruvate (PEP). It is essential for the degradation of carbohydrates via glycolysis. This Campylobacter lari (strain RM2100 / D67 / ATCC BAA-1060) protein is Enolase.